We begin with the raw amino-acid sequence, 300 residues long: Putative hydrolase ML2424 (300 aa).

Asp56 (nucleophile) is an active-site residue. Asp56, Asp58, and Asp231 together coordinate Mg(2+). Asp58 (proton donor) is an active-site residue.

The protein belongs to the HAD-like hydrolase superfamily. SerB family. Requires Mg(2+) as cofactor.

In Mycobacterium leprae (strain TN), this protein is Putative hydrolase ML2424.